The following is a 199-amino-acid chain: Thymidine kinase (199 aa).

Residues glycine 15–serine 22 and aspartate 88–glutamine 91 each bind ATP. The active-site Proton acceptor is the glutamate 89. Residues cysteine 145, cysteine 148, cysteine 183, and histidine 186 each contribute to the Zn(2+) site.

The protein belongs to the thymidine kinase family. In terms of assembly, homotetramer.

The protein localises to the cytoplasm. The enzyme catalyses thymidine + ATP = dTMP + ADP + H(+). The protein is Thymidine kinase of Staphylococcus saprophyticus subsp. saprophyticus (strain ATCC 15305 / DSM 20229 / NCIMB 8711 / NCTC 7292 / S-41).